The primary structure comprises 366 residues: MKRLKKLTREPGVFFRDYFNKKYPVRNIEQRINEIEEPAIIANSLHLAAVESAIHLSPFKIDVVFTWVDNSDTQWQQRHQQYCHAASPNNLYSNDETRFANHNELYYSLHSVRSFLPWVNHIYIITDSQTPKWFKSAEYPNVSIIDHSEIIDKQYLPTFNSHVIEAHLHNIPNLSEHFIYFNDDVFVARPLHREHFFHANGIASLFIADKSLQKMATKGTITPTLSASQNCIRLLNQRYDCNLDHPLVHTYVPLRKSGFQTAWQYYREEIKAFLPNKFRTNQDLNLATFLVPWLMYLDGKSIPNNDICYYFNIRSNKAPTQYLKLLQKNEDNQQPHSFCANDFHSEQQLYDYHAKLIAMLKDYFKI.

Belongs to the stealth family.

This chain is Capsular polysaccharide phosphotransferase LcbA (lcbA), found in Neisseria meningitidis.